We begin with the raw amino-acid sequence, 205 residues long: MPTVWQLLFLLLVVAIVYVYALRFAQRFLQQDALARQHAAAAPLMHFAFQRARAVDCALNRLPCVTSQQCRDNCVIASAASDLTCDNGFCSATNILADAQAPGSAIECDPALGLLRVYAAGGDFVVSQTCVSTYRDLVDDTGAARPYLCDAGALRLELDTTPFSADACTCAAGYDKLMFRQTALARTVPVCIPTHAASLYRRVYG.

This is an uncharacterized protein from Orgyia pseudotsugata (Douglas-fir tussock moth).